The primary structure comprises 272 residues: Isoprenyl transferase (272 aa).

D32 is a catalytic residue. D32 contacts Mg(2+). Substrate-binding positions include 33–36 (GNGR), W37, R45, H49, and 77–79 (STE). Catalysis depends on N80, which acts as the Proton acceptor. Residues W81, R83, R200, and 206 to 208 (RIS) contribute to the substrate site. E219 contributes to the Mg(2+) binding site.

It belongs to the UPP synthase family. As to quaternary structure, homodimer. Requires Mg(2+) as cofactor.

In terms of biological role, catalyzes the condensation of isopentenyl diphosphate (IPP) with allylic pyrophosphates generating different type of terpenoids. This is Isoprenyl transferase from Prochlorococcus marinus subsp. pastoris (strain CCMP1986 / NIES-2087 / MED4).